The primary structure comprises 305 residues: Undecaprenyl-diphosphatase (305 aa).

8 helical membrane-spanning segments follow: residues 18–38, 55–75, 103–123, 130–150, 187–207, 225–245, 246–266, and 284–304; these read GVTELFPVSSLGHAVLVPALV, YLAFIVGLHVATAAALLVFFW, WLIVVGTIPVGLAGLALEQLF, PVPAAAFLLLNSVALYAGEVL, GVLIGAAQILALLPGISRSGI, FSFLLATPIILAAGVYKIPEL, FGPLGAGIGGQVLAGSIASFV, and LTPFAIYCAVAGGASLVWLAL.

The protein belongs to the UppP family.

It is found in the cell membrane. The enzyme catalyses di-trans,octa-cis-undecaprenyl diphosphate + H2O = di-trans,octa-cis-undecaprenyl phosphate + phosphate + H(+). In terms of biological role, catalyzes the dephosphorylation of undecaprenyl diphosphate (UPP). Confers resistance to bacitracin. The protein is Undecaprenyl-diphosphatase of Mycobacterium avium (strain 104).